The primary structure comprises 702 residues: Elongation factor G (702 aa).

One can recognise a tr-type G domain in the interval 8-290 (CQYRNIGISA…AIIEYLPAPN (283 aa)). Residues 17–24 (AHIDAGKT), 88–92 (DTPGH), and 142–145 (NKMD) contribute to the GTP site.

Belongs to the TRAFAC class translation factor GTPase superfamily. Classic translation factor GTPase family. EF-G/EF-2 subfamily.

It localises to the cytoplasm. Its function is as follows. Catalyzes the GTP-dependent ribosomal translocation step during translation elongation. During this step, the ribosome changes from the pre-translocational (PRE) to the post-translocational (POST) state as the newly formed A-site-bound peptidyl-tRNA and P-site-bound deacylated tRNA move to the P and E sites, respectively. Catalyzes the coordinated movement of the two tRNA molecules, the mRNA and conformational changes in the ribosome. The protein is Elongation factor G of Buchnera aphidicola subsp. Schizaphis graminum (strain Sg).